A 184-amino-acid chain; its full sequence is ATP synthase subunit delta (184 aa).

Belongs to the ATPase delta chain family. In terms of assembly, F-type ATPases have 2 components, F(1) - the catalytic core - and F(0) - the membrane proton channel. F(1) has five subunits: alpha(3), beta(3), gamma(1), delta(1), epsilon(1). F(0) has three main subunits: a(1), b(2) and c(10-14). The alpha and beta chains form an alternating ring which encloses part of the gamma chain. F(1) is attached to F(0) by a central stalk formed by the gamma and epsilon chains, while a peripheral stalk is formed by the delta and b chains.

It localises to the cell membrane. Functionally, f(1)F(0) ATP synthase produces ATP from ADP in the presence of a proton or sodium gradient. F-type ATPases consist of two structural domains, F(1) containing the extramembraneous catalytic core and F(0) containing the membrane proton channel, linked together by a central stalk and a peripheral stalk. During catalysis, ATP synthesis in the catalytic domain of F(1) is coupled via a rotary mechanism of the central stalk subunits to proton translocation. Its function is as follows. This protein is part of the stalk that links CF(0) to CF(1). It either transmits conformational changes from CF(0) to CF(1) or is implicated in proton conduction. The polypeptide is ATP synthase subunit delta (Bacillus licheniformis (strain ATCC 14580 / DSM 13 / JCM 2505 / CCUG 7422 / NBRC 12200 / NCIMB 9375 / NCTC 10341 / NRRL NRS-1264 / Gibson 46)).